We begin with the raw amino-acid sequence, 793 residues long: Serine/threonine-protein kinase MARK1 (793 aa).

The interval 1-40 (MSARTPLPTVNERDTENHTSVDGYTETHIPPTKSSSRQNI) is disordered. Phosphothreonine is present on T5. Residues 60–311 (YRLQKTIGKG…LEQIMKDRWM (252 aa)) form the Protein kinase domain. ATP contacts are provided by residues 66-74 (IGKGNFAKV) and K89. D182 serves as the catalytic Proton acceptor. Phosphothreonine is present on T208. Phosphothreonine; by LKB1 and TAOK1 is present on T215. At S219 the chain carries Phosphoserine; by GSK3-beta. A UBA domain is found at 329–370 (DLNDAKRIDIMVTMGFARDEINDALVSQKYDEVMATYILLGR). Disordered regions lie at residues 377–499 (GGES…GGSM) and 517–697 (LQNG…KPRS). Polar residues predominate over residues 380 to 403 (SLSSGNLCQRSRPSSDLNNSTLQS). 6 positions are modified to phosphoserine: S382, S390, S393, S403, S423, and S444. A compositionally biased stretch (basic and acidic residues) spans 447 to 459 (SEQKEEWDKDTAR). Over residues 462 to 473 (GSTTVGSKSEVT) the composition is skewed to polar residues. S475 carries the post-translational modification Phosphoserine. The span at 487–499 (AGPSNNVYSGGSM) shows a compositional bias: polar residues. Low complexity-rich tracts occupy residues 523–547 (SSLT…GPSA) and 585–599 (PAAS…ASTP). Phosphoserine is present on S588. T613 carries the phosphothreonine; by PKC/PRKCZ modification. Over residues 647–657 (GTSTGIISKIT) the composition is skewed to polar residues. Composition is skewed to basic and acidic residues over residues 661–676 (VRRD…RTDT) and 683–695 (EPKD…EAKP). S666 bears the Phosphoserine mark. The region spanning 744-793 (DARQDSLVQWEMEVCKLPRLSLNGVRFKRISGTSIAFKNIASKIANELKL) is the KA1 domain.

This sequence belongs to the protein kinase superfamily. CAMK Ser/Thr protein kinase family. SNF1 subfamily. Interacts with MAPT/TAU. The cofactor is Mg(2+). Post-translationally, phosphorylation at Thr-613 by PRKCZ/aPKC in polarized epithelial cells inhibits the kinase activity. Phosphorylated at Thr-215 by STK11/LKB1 in complex with STE20-related adapter-alpha (STRADA) pseudo kinase and CAB39. Phosphorylation at Thr-215 by TAOK1 activates the kinase activity, leading to phosphorylation and detachment of MAPT/TAU from microtubules. Phosphorylation at Ser-219 by GSK3-beta (GSK3B) inhibits the kinase activity. Highly expressed in brain and spleen and at lower levels in kidney and skeletal muscle.

The protein resides in the cell membrane. It is found in the cytoplasm. The protein localises to the cytoskeleton. It localises to the cell projection. Its subcellular location is the dendrite. It carries out the reaction L-seryl-[protein] + ATP = O-phospho-L-seryl-[protein] + ADP + H(+). It catalyses the reaction L-threonyl-[protein] + ATP = O-phospho-L-threonyl-[protein] + ADP + H(+). The catalysed reaction is L-seryl-[tau protein] + ATP = O-phospho-L-seryl-[tau protein] + ADP + H(+). The enzyme catalyses L-threonyl-[tau protein] + ATP = O-phospho-L-threonyl-[tau protein] + ADP + H(+). Activated by phosphorylation on Thr-215. Inhibited by phosphorylation at Ser-219. In terms of biological role, serine/threonine-protein kinase. Involved in cell polarity and microtubule dynamics regulation. Phosphorylates DCX, MAP2 and MAP4. Phosphorylates the microtubule-associated protein MAPT/TAU. Involved in cell polarity by phosphorylating the microtubule-associated proteins MAP2, MAP4 and MAPT/TAU at KXGS motifs, causing detachment from microtubules, and their disassembly. Involved in the regulation of neuronal migration through its dual activities in regulating cellular polarity and microtubule dynamics, possibly by phosphorylating and regulating DCX. Also acts as a positive regulator of the Wnt signaling pathway, probably by mediating phosphorylation of dishevelled proteins (DVL1, DVL2 and/or DVL3). This chain is Serine/threonine-protein kinase MARK1, found in Rattus norvegicus (Rat).